A 124-amino-acid chain; its full sequence is MPTIQQLVRKGRSPKVVNTNGPALQGNPMRRGVCTRVYTTTPTKPNSAVRKVARVRLNGGIEVTAYIPGEGHNLQEHSIVLVRGGRVKDLPGVRYKIVRGALDTQGVKNRGQARSRYGAKKEKK.

3-methylthioaspartic acid is present on D89. A disordered region spans residues 105–124 (QGVKNRGQARSRYGAKKEKK). Over residues 111–124 (GQARSRYGAKKEKK) the composition is skewed to basic residues.

It belongs to the universal ribosomal protein uS12 family. In terms of assembly, part of the 30S ribosomal subunit. Contacts proteins S8 and S17. May interact with IF1 in the 30S initiation complex.

Its function is as follows. With S4 and S5 plays an important role in translational accuracy. In terms of biological role, interacts with and stabilizes bases of the 16S rRNA that are involved in tRNA selection in the A site and with the mRNA backbone. Located at the interface of the 30S and 50S subunits, it traverses the body of the 30S subunit contacting proteins on the other side and probably holding the rRNA structure together. The combined cluster of proteins S8, S12 and S17 appears to hold together the shoulder and platform of the 30S subunit. This is Small ribosomal subunit protein uS12 from Micrococcus luteus (Micrococcus lysodeikticus).